A 120-amino-acid chain; its full sequence is NADH dehydrogenase [ubiquinone] 1 subunit C2 (120 aa).

Methionine 1 carries the post-translational modification N-acetylmethionine. The chain crosses the membrane as a helical span at residues 57 to 76 (GLHRQLLYITSFVFVGYYLL).

The protein belongs to the complex I NDUFC2 subunit family. In terms of assembly, complex I is composed of 45 different subunits. Interacts with TMEM242. In terms of processing, there is a minor unacetylated form of subunit B14.5b.

The protein resides in the mitochondrion inner membrane. Functionally, accessory subunit of the mitochondrial membrane respiratory chain NADH dehydrogenase (Complex I), that is believed not to be involved in catalysis but required for the complex assembly. Complex I functions in the transfer of electrons from NADH to the respiratory chain. The immediate electron acceptor for the enzyme is believed to be ubiquinone. The polypeptide is NADH dehydrogenase [ubiquinone] 1 subunit C2 (Bos taurus (Bovine)).